Reading from the N-terminus, the 173-residue chain is NADH-ubiquinone oxidoreductase chain 6 (173 aa).

5 helical membrane-spanning segments follow: residues 1–21 (MVYF…GVAS), 28–48 (AALG…SYGG), 53–73 (LILF…TAAL), 87–107 (VLMY…YFLV), and 139–159 (LGGW…FVVL).

The protein belongs to the complex I subunit 6 family.

The protein localises to the mitochondrion membrane. The enzyme catalyses a ubiquinone + NADH + 5 H(+)(in) = a ubiquinol + NAD(+) + 4 H(+)(out). Functionally, core subunit of the mitochondrial membrane respiratory chain NADH dehydrogenase (Complex I) that is believed to belong to the minimal assembly required for catalysis. Complex I functions in the transfer of electrons from NADH to the respiratory chain. The immediate electron acceptor for the enzyme is believed to be ubiquinone. The sequence is that of NADH-ubiquinone oxidoreductase chain 6 (MT-ND6) from Scyliorhinus canicula (Small-spotted catshark).